The primary structure comprises 782 residues: E3 UFM1-protein ligase 1 homolog (782 aa).

Residues 404–477 (NASTQELEDD…GSRGGGGVNK (74 aa)) are disordered. Residues 443–453 (KSTKKHQRGKA) show a composition bias toward basic residues.

Belongs to the UFL1 family.

In terms of biological role, E3 UFM1-protein ligase that mediates ufmylation of target proteins. The protein is E3 UFM1-protein ligase 1 homolog of Drosophila erecta (Fruit fly).